The primary structure comprises 132 residues: Acid shock protein (132 aa).

Positions 1-21 (MKKVLALIVAATMGLSSVAFA) are cleaved as a signal peptide. Positions 22 to 69 (AETTAAATAAPAATSTTAAPAVEKAAPAKATHHKKHKATKQTTEQKAQ) are excised as a propeptide. A compositionally biased stretch (low complexity) spans 30-50 (AAPAATSTTAAPAVEKAAPAK). Residues 30-132 (AAPAATSTTA…AKKSATAPAA (103 aa)) are disordered. Positions 51 to 60 (ATHHKKHKAT) are enriched in basic residues. A compositionally biased stretch (low complexity) spans 61–99 (KQTTEQKAQAAKKAVKKAPAQKAQAAKKAVKKAPVQKAQ). A compositionally biased stretch (basic residues) spans 100-124 (AAKKHVKKAPAQKAQAAKKHHKTAK).

The protein belongs to the Asr family. Post-translationally, proteolytic processing gives rise to the active protein.

The protein localises to the periplasm. In terms of biological role, required for growth and/or survival at acidic conditions. The sequence is that of Acid shock protein from Yersinia enterocolitica serotype O:8 / biotype 1B (strain NCTC 13174 / 8081).